The chain runs to 397 residues: Enoyl-[acyl-carrier-protein] reductase [NADH] (397 aa).

Residues 48–53, 74–75, 111–112, and 139–140 contribute to the NAD(+) site; these read GASTGY, FE, DA, and LA. Substrate is bound at residue Tyr-224. Catalysis depends on Tyr-234, which acts as the Proton donor. Residues Lys-243 and 272 to 274 contribute to the NAD(+) site; that span reads VVT.

This sequence belongs to the TER reductase family. As to quaternary structure, monomer.

It carries out the reaction a 2,3-saturated acyl-[ACP] + NAD(+) = a (2E)-enoyl-[ACP] + NADH + H(+). It participates in lipid metabolism; fatty acid biosynthesis. In terms of biological role, involved in the final reduction of the elongation cycle of fatty acid synthesis (FAS II). Catalyzes the reduction of a carbon-carbon double bond in an enoyl moiety that is covalently linked to an acyl carrier protein (ACP). This chain is Enoyl-[acyl-carrier-protein] reductase [NADH], found in Pseudomonas fluorescens (strain SBW25).